Consider the following 518-residue polypeptide: Putative N-acetylmuramoyl-L-alanine amidase YrvJ (518 aa).

The signal sequence occupies residues 1-27 (MNKKYFVLIVCIIFTSALFPTFSSVTA). 4 SH3b domains span residues 29 to 91 (QGEA…ITKE), 102 to 164 (SDTV…TSGG), 181 to 243 (STTG…LTSS), and 258 to 320 (AKKA…VQTS). Disordered regions lie at residues 94 to 121 (ASTS…PGTS) and 160 to 186 (VTSG…TGTV). 2 stretches are compositionally biased toward low complexity: residues 95–108 (STSS…VTST) and 160–169 (VTSGGSSSAS). Positions 322 to 352 (SAEEAGEPPVSDSPSGNGSLNNKTIIVDPGH) are disordered. Over residues 333-345 (DSPSGNGSLNNKT) the composition is skewed to polar residues. The 169-residue stretch at 346–514 (IIVDPGHGGK…VTDGIESGLE (169 aa)) folds into the MurNAc-LAA domain.

It belongs to the N-acetylmuramoyl-L-alanine amidase 3 family.

It is found in the secreted. The protein resides in the cell wall. The enzyme catalyses Hydrolyzes the link between N-acetylmuramoyl residues and L-amino acid residues in certain cell-wall glycopeptides.. Its function is as follows. Probably involved in cell-wall metabolism. The sequence is that of Putative N-acetylmuramoyl-L-alanine amidase YrvJ (yrvJ) from Bacillus subtilis (strain 168).